The sequence spans 179 residues: Trypsin inhibitor (179 aa).

The residue at position 1 (Gln1) is a Pyrrolidone carboxylic acid. 2 disulfides stabilise this stretch: Cys40/Cys85 and Cys132/Cys143.

This sequence belongs to the protease inhibitor I3 (leguminous Kunitz-type inhibitor) family. Heterodimer of an alpha and a beta chain linked by a disulfide bond. Abundant in dry seeds.

It localises to the secreted. Functionally, inhibits trypsin, plasmin, human plasma kallikrein, chymotrypsin and factor XIIa activity. In Leucaena leucocephala (White popinac), this protein is Trypsin inhibitor.